The chain runs to 158 residues: Cytochrome b6-f complex subunit 4 (158 aa).

A run of 3 helical transmembrane segments spans residues 34–54 (LLYI…GLAV), 93–113 (LLGV…PFLE), and 129–149 (TVFL…TLPI).

This sequence belongs to the cytochrome b family. PetD subfamily. In terms of assembly, the 4 large subunits of the cytochrome b6-f complex are cytochrome b6, subunit IV (17 kDa polypeptide, petD), cytochrome f and the Rieske protein, while the 4 small subunits are petG, petL, petM and petN. The complex functions as a dimer.

It is found in the plastid. The protein resides in the chloroplast thylakoid membrane. Functionally, component of the cytochrome b6-f complex, which mediates electron transfer between photosystem II (PSII) and photosystem I (PSI), cyclic electron flow around PSI, and state transitions. In Liriodendron tulipifera (Tuliptree), this protein is Cytochrome b6-f complex subunit 4.